Consider the following 499-residue polypeptide: FAD-dependent oxidoreductase domain-containing protein 1 (499 aa).

Residues 75-95 traverse the membrane as a helical segment; the sequence is ERADVVIVGGGVMGWSIAYWL.

FAD serves as cofactor.

The protein resides in the mitochondrion inner membrane. Its function is as follows. Required for the assembly of the mitochondrial membrane respiratory chain NADH dehydrogenase (Complex I). Involved in mid-late stages of complex I assembly. In Xenopus laevis (African clawed frog), this protein is FAD-dependent oxidoreductase domain-containing protein 1 (foxred1).